Here is a 539-residue protein sequence, read N- to C-terminus: RING finger protein 37 (539 aa).

The disordered stretch occupies residues P226–L249. A compositionally biased stretch (polar residues) spans Q239–L249. The region spanning D258 to S338 is the U-box domain. Disordered stretches follow at residues L359–A399 and G456–P479. The span at H374–S395 shows a compositional bias: low complexity. The segment at C481–R526 adopts an RING-type zinc-finger fold.

As to quaternary structure, interacts with UBE2L3. Interacts with VCP. As to expression, expressed in testis and placenta.

Its subcellular location is the nucleus. It catalyses the reaction S-ubiquitinyl-[E2 ubiquitin-conjugating enzyme]-L-cysteine + [acceptor protein]-L-lysine = [E2 ubiquitin-conjugating enzyme]-L-cysteine + N(6)-ubiquitinyl-[acceptor protein]-L-lysine.. It functions in the pathway protein modification; protein ubiquitination. In terms of biological role, may have a ubiquitin-protein ligase activity acting as an E3 ubiquitin-protein ligase or as a ubiquitin-ubiquitin ligase promoting elongation of ubiquitin chains on substrates. In Mus musculus (Mouse), this protein is RING finger protein 37 (Ubox5).